A 318-amino-acid polypeptide reads, in one-letter code: Acetyl-coenzyme A carboxylase carboxyl transferase subunit alpha (318 aa).

The CoA carboxyltransferase C-terminal domain maps to 39-292 (LSDKAERQLR…GAAIAETLPG (254 aa)).

It belongs to the AccA family. Acetyl-CoA carboxylase is a heterohexamer composed of biotin carboxyl carrier protein (AccB), biotin carboxylase (AccC) and two subunits each of ACCase subunit alpha (AccA) and ACCase subunit beta (AccD).

It localises to the cytoplasm. It catalyses the reaction N(6)-carboxybiotinyl-L-lysyl-[protein] + acetyl-CoA = N(6)-biotinyl-L-lysyl-[protein] + malonyl-CoA. Its pathway is lipid metabolism; malonyl-CoA biosynthesis; malonyl-CoA from acetyl-CoA: step 1/1. Component of the acetyl coenzyme A carboxylase (ACC) complex. First, biotin carboxylase catalyzes the carboxylation of biotin on its carrier protein (BCCP) and then the CO(2) group is transferred by the carboxyltransferase to acetyl-CoA to form malonyl-CoA. The polypeptide is Acetyl-coenzyme A carboxylase carboxyl transferase subunit alpha (Acidiphilium cryptum (strain JF-5)).